Reading from the N-terminus, the 60-residue chain is UPF0434 protein Pnap_1922 (60 aa).

The protein belongs to the UPF0434 family.

This is UPF0434 protein Pnap_1922 from Polaromonas naphthalenivorans (strain CJ2).